Reading from the N-terminus, the 229-residue chain is Ribonuclease T (229 aa).

Residues 23–197 (VIIDVETAGF…YDTERTAKLF (175 aa)) form the Exonuclease domain. The Mg(2+) site is built by D26, E28, H184, and D189. The Proton donor/acceptor role is filled by H184.

This sequence belongs to the RNase T family. As to quaternary structure, homodimer. The cofactor is Mg(2+).

Trims short 3' overhangs of a variety of RNA species, leaving a one or two nucleotide 3' overhang. Responsible for the end-turnover of tRNA: specifically removes the terminal AMP residue from uncharged tRNA (tRNA-C-C-A). Also appears to be involved in tRNA biosynthesis. This is Ribonuclease T from Haemophilus influenzae (strain ATCC 51907 / DSM 11121 / KW20 / Rd).